A 367-amino-acid polypeptide reads, in one-letter code: GMP synthase [glutamine-hydrolyzing] subunit B (367 aa).

In terms of domain architecture, GMPS ATP-PPase spans Phe2–Arg190. Residue Ser29 to Thr35 participates in ATP binding.

As to quaternary structure, heterodimer composed of a glutamine amidotransferase subunit (A) and a GMP-binding subunit (B).

It carries out the reaction XMP + L-glutamine + ATP + H2O = GMP + L-glutamate + AMP + diphosphate + 2 H(+). Its pathway is purine metabolism; GMP biosynthesis; GMP from XMP (L-Gln route): step 1/1. Catalyzes the synthesis of GMP from XMP. The protein is GMP synthase [glutamine-hydrolyzing] subunit B (guaAB) of Saccharolobus solfataricus (strain ATCC 35092 / DSM 1617 / JCM 11322 / P2) (Sulfolobus solfataricus).